The primary structure comprises 271 residues: Protein-L-isoaspartate O-methyltransferase (271 aa).

Residues 1–15 (MRKPVTPPGNPPRPR) show a composition bias toward pro residues. A disordered region spans residues 1–60 (MRKPVTPPGNPPRPRSPGYGSTSLAPGITAANSNTRISPPTLARPAPAAGAGGQGGNLGL). The span at 39-49 (PPTLARPAPAA) shows a compositional bias: low complexity. Ser119 is an active-site residue.

Belongs to the methyltransferase superfamily. L-isoaspartyl/D-aspartyl protein methyltransferase family.

It is found in the cytoplasm. It catalyses the reaction [protein]-L-isoaspartate + S-adenosyl-L-methionine = [protein]-L-isoaspartate alpha-methyl ester + S-adenosyl-L-homocysteine. Catalyzes the methyl esterification of L-isoaspartyl residues in peptides and proteins that result from spontaneous decomposition of normal L-aspartyl and L-asparaginyl residues. It plays a role in the repair and/or degradation of damaged proteins. The polypeptide is Protein-L-isoaspartate O-methyltransferase (Bordetella petrii (strain ATCC BAA-461 / DSM 12804 / CCUG 43448)).